Consider the following 528-residue polypeptide: Phosphoenolpyruvate carboxykinase (ATP) (528 aa).

Residues Arg56, Tyr192, and Lys198 each contribute to the substrate site. ATP contacts are provided by residues Lys198, His217, and 233–241 (GLSGTGKTT). Mn(2+)-binding residues include Lys198 and His217. Asp254 contacts Mn(2+). ATP-binding residues include Glu282, Arg319, and Thr444. Residue Arg319 participates in substrate binding.

It belongs to the phosphoenolpyruvate carboxykinase (ATP) family. Mn(2+) is required as a cofactor.

The protein localises to the cytoplasm. It catalyses the reaction oxaloacetate + ATP = phosphoenolpyruvate + ADP + CO2. Its pathway is carbohydrate biosynthesis; gluconeogenesis. Functionally, involved in the gluconeogenesis. Catalyzes the conversion of oxaloacetate (OAA) to phosphoenolpyruvate (PEP) through direct phosphoryl transfer between the nucleoside triphosphate and OAA. The sequence is that of Phosphoenolpyruvate carboxykinase (ATP) from Bacillus cereus (strain G9842).